The primary structure comprises 368 residues: 1-deoxy-D-xylulose 5-phosphate reductoisomerase (368 aa).

NADPH contacts are provided by threonine 10, glycine 11, serine 12, isoleucine 13, glutamine 38, and asparagine 100. Lysine 101 contacts 1-deoxy-D-xylulose 5-phosphate. Residue glutamate 102 participates in NADPH binding. A Mn(2+)-binding site is contributed by aspartate 125. Residues serine 126, glutamate 127, serine 151, and histidine 172 each coordinate 1-deoxy-D-xylulose 5-phosphate. Residue glutamate 127 participates in Mn(2+) binding. Glycine 178 serves as a coordination point for NADPH. 1-deoxy-D-xylulose 5-phosphate contacts are provided by serine 185, asparagine 190, lysine 191, and glutamate 194. Glutamate 194 serves as a coordination point for Mn(2+).

This sequence belongs to the DXR family. It depends on Mg(2+) as a cofactor. Requires Mn(2+) as cofactor.

It catalyses the reaction 2-C-methyl-D-erythritol 4-phosphate + NADP(+) = 1-deoxy-D-xylulose 5-phosphate + NADPH + H(+). It participates in isoprenoid biosynthesis; isopentenyl diphosphate biosynthesis via DXP pathway; isopentenyl diphosphate from 1-deoxy-D-xylulose 5-phosphate: step 1/6. Catalyzes the NADPH-dependent rearrangement and reduction of 1-deoxy-D-xylulose-5-phosphate (DXP) to 2-C-methyl-D-erythritol 4-phosphate (MEP). This Tropheryma whipplei (strain TW08/27) (Whipple's bacillus) protein is 1-deoxy-D-xylulose 5-phosphate reductoisomerase.